A 96-amino-acid polypeptide reads, in one-letter code: Cell division protein FtsB (96 aa).

Residues Met-1 to Ile-11 are Cytoplasmic-facing. A helical transmembrane segment spans residues Phe-12–Phe-29. Topologically, residues Ser-30–Lys-96 are periplasmic.

The protein belongs to the FtsB family. In terms of assembly, part of a complex composed of FtsB, FtsL and FtsQ.

The protein localises to the cell inner membrane. Functionally, essential cell division protein. May link together the upstream cell division proteins, which are predominantly cytoplasmic, with the downstream cell division proteins, which are predominantly periplasmic. This Francisella tularensis subsp. tularensis (strain SCHU S4 / Schu 4) protein is Cell division protein FtsB.